The primary structure comprises 487 residues: L-tartrate/succinate antiporter (487 aa).

Topologically, residues 1 to 9 (MKPSTEWWR) are periplasmic. A helical transmembrane segment spans residues 10 to 30 (YLAPLAVIAIIALLPVPAGLE). The Cytoplasmic segment spans residues 31–32 (NH). Helical transmembrane passes span 33 to 53 (TWLY…EPVP) and 54 to 74 (GAVV…WLLF). Residues 75 to 92 (SPEQLAQPGFKFTAKSLS) are Cytoplasmic-facing. A helical transmembrane segment spans residues 93 to 113 (WAVSGFSNSVIWLIFAAFMFG). Residues 114–136 (TGYEKTGLGRRIALILVKKMGHR) lie on the Periplasmic side of the membrane. A helical membrane pass occupies residues 137-157 (TLFLGYAVMFSELILAPVTPS). Residues 158–188 (NSARGAGIIYPIIRNLPPLYQSQPNDSSSRS) lie on the Cytoplasmic side of the membrane. The helical transmembrane segment at 189–209 (IGSYIMWMGIVADCVTSAIFL) threads the bilayer. Residues 210–235 (TAMAPNLLLIGLMKSASHATLSWGDW) are Periplasmic-facing. Residues 236–256 (FLGMLPLSILLVLLVPWLAYV) traverse the membrane as a helical segment. The Cytoplasmic segment spans residues 257 to 291 (LYPPVLKSGDQVPRWAETELQAMGPLCSREKRMLG). Transmembrane regions (helical) follow at residues 292 to 312 (LMVG…AAMV) and 313 to 333 (GYSV…DIVS). At 334-339 (NKAAWN) the chain is on the cytoplasmic side. Residues 340-360 (VFFWLASLITLATGLNNTGFI) traverse the membrane as a helical segment. Topologically, residues 361-369 (SWFGKLLAG) are periplasmic. A helical transmembrane segment spans residues 370–390 (SLSGYSPTMVMVALIVVFYLL). Residues 391–392 (RY) are Cytoplasmic-facing. A helical membrane pass occupies residues 393-413 (FFASATAYTSALAPMMIAAAL). Residues 414–417 (AMPE) are Periplasmic-facing. A helical membrane pass occupies residues 418 to 438 (IPLPVFCLMVGAAIGLGSILT). Over 439–464 (PYATGPSPIYYGSGYLPTADYWRLGA) the chain is Cytoplasmic. A helical transmembrane segment spans residues 465-485 (IFGLIFLVLLVITGLLWMPVV). Over 486 to 487 (LL) the chain is Periplasmic.

The protein belongs to the SLC13A/DASS transporter (TC 2.A.47) family. DIT1 subfamily.

The protein localises to the cell inner membrane. The catalysed reaction is (2R,3R)-tartrate(out) + succinate(in) = (2R,3R)-tartrate(in) + succinate(out). Functionally, catalyzes the uptake of tartrate in exchange for intracellular succinate. Essential for anaerobic L-tartrate fermentation. This Escherichia coli (strain K12) protein is L-tartrate/succinate antiporter.